A 668-amino-acid chain; its full sequence is Auxilin-like clathrin uncoating factor SWA2 (668 aa).

Residues 1 to 95 are disordered; that stretch reads MSDPFAHLLT…ANNTPPSALA (95 aa). Residues 1–100 form a CB1 region; the sequence is MSDPFAHLLT…PSALANTDDD (100 aa). The segment covering 17-36 has biased composition (polar residues); it reads SASASKETTPQSSNSPSITG. Phosphoserine occurs at positions 52 and 64. The segment covering 76-92 has biased composition (low complexity); sequence PTNSTTKSNTANNTPPS. One can recognise a UBA domain in the interval 140–180; that stretch reads DEVKDMEIARLMSLGLSIEEATEFYENDVTYERYLEILKSK. Residues 238-302 form a CB2 region; it reads EANDRLNNYS…FETKIDITKR (65 aa). 3 positions are modified to phosphoserine: Ser-264, Ser-308, and Ser-312. Disordered regions lie at residues 302 to 323 and 339 to 359; these read RTAP…EENS and EGNL…ENSN. Positions 303–362 are CB3; it reads TAPDVSHSSSPTSGILIEENSRRNEPLIEDSLLDFSEGNLTNSKSNEDSTLFNENSNTDS. Over residues 340 to 359 the composition is skewed to polar residues; sequence GNLTNSKSNEDSTLFNENSN. TPR repeat units lie at residues 374-407, 412-445, and 467-500; these read YNEF…LPLN, IIAL…FPSS, and PKIM…NFFD. Positions 511-556 are disordered; that stretch reads QDFINPPPVKKSMPVKKKTTTTSPATKKQNLTASSSNSPISVDSTS. The span at 539–555 shows a compositional bias: polar residues; the sequence is QNLTASSSNSPISVDST. One can recognise a J domain in the interval 603 to 668; the sequence is CNWKDVSMQD…DKFKLQNDIN (66 aa).

Interacts with the clathrin light and heavy chains CLC1 and CHC1, respectively. Binds to clathrin with its N-terminal domain containing 3 clathrin-binding (CB) motifs. Association with clathrin is transient. Binds to polyubiquitin and ubiquitinated proteins.

The protein resides in the cytoplasm. It localises to the endoplasmic reticulum membrane. Cofactor for the uncoating of clathrin-coated vesicles (CCVs) by Hsp70-type chaperones (SSA1/2/3 and SSB1/2). Coat disassembly is important for fusion of vesicles with target membranes and for recycling components of clathrin coats to the cytoplasm for further rounds of vesicle formation. Binds to assembled clathrin and recruits the ATP-activated chaperone to CCVs. Stimulates the ATPase activity of the clathrin-associated Hsp70-type chaperone SSA1, which then disrupts clathrin-clathrin interactions, leading to release of the clathrin coat. In addition, prevents unproductive clathrin assembly in the cell. Also required for cortical endoplasmic reticulum inheritance. This is Auxilin-like clathrin uncoating factor SWA2 (SWA2) from Saccharomyces cerevisiae (strain ATCC 204508 / S288c) (Baker's yeast).